The primary structure comprises 226 residues: Thaumatin-like protein (226 aa).

A signal peptide spans 1–24 (MNFSKNLPLLVSLWAITFFAYTHA). 8 disulfide bridges follow: Cys-33–Cys-225, Cys-74–Cys-84, Cys-89–Cys-95, Cys-140–Cys-214, Cys-145–Cys-197, Cys-153–Cys-163, Cys-167–Cys-176, and Cys-177–Cys-184.

This sequence belongs to the thaumatin family. In terms of tissue distribution, expressed in fruits.

It localises to the secreted. 3D-structure modeling suggests it may have endo-(1,3)-beta-glucanase activity. This chain is Thaumatin-like protein, found in Olea europaea (Common olive).